A 421-amino-acid chain; its full sequence is MTKGGLGIAAMSYVVIDYMRYVSPVWHSRLMPVLWSVLAIAVVTRVLFYKHWSKELRAAIPFLGSIVFLLCALLFEALCVRSVTAVLGLDWHRETPPLPDTGQWFLLALNESLPGTLVEILRAHIIGLHHFLMLFIMLGFSVVFDSVKAPGLGLGARYIFTMGVGRLLRAITFVSTILPSARPWCASARFNNVPSQPHRWAQKYYVPYANDPAAIRKLLHWDAAYADPGSYIGDYRADWGSMSFLSEFLRPSYSEGSSWFALLKKAGGGCNDLMYSGHMLVAVLTAMAWTEAYGGFSSAMIWLFVAHSAQREIRERHHYTVDCIVAIYVGILLWKMTGFIWSAERKTKQTKLEKIQNSLIHAAKDGDIETVRRLVEEIEVSSRVEKQSKVISNRTMTVFACATVITTLTIVILALTLTSDG.

Transmembrane regions (helical) follow at residues Leu30–Lys50, Ile60–Val80, His124–Phe144, Tyr158–Leu178, Ala286–Ala306, Cys323–Ala343, and Thr397–Leu417.

It belongs to the sphingomyelin synthase family.

Its subcellular location is the membrane. It functions in the pathway sphingolipid metabolism. Catalyzes the biosynthesis of sphingolipids with very long-chain fatty acid (VLCFA). Required for the formation of plasmodesmal cytoplasmic sleeve during the transition from type I to type II plasmodesmata to modulate post-sieve elements (SE) unloading and symplastic cell-to-cell molecular trafficking at the phloem pole pericycle (PPP)-endodermis interface in roots. The polypeptide is Protein PHLOEM UNLOADING MODULATOR (Arabidopsis thaliana (Mouse-ear cress)).